The chain runs to 295 residues: Ethanolamine ammonia-lyase small subunit (295 aa).

Adenosylcob(III)alamin is bound by residues Val207, Glu228, and Cys258.

It belongs to the EutC family. In terms of assembly, the basic unit is a heterodimer which dimerizes to form tetramers. The heterotetramers trimerize; 6 large subunits form a core ring with 6 small subunits projecting outwards. Adenosylcob(III)alamin serves as cofactor.

It is found in the bacterial microcompartment. The catalysed reaction is ethanolamine = acetaldehyde + NH4(+). Its pathway is amine and polyamine degradation; ethanolamine degradation. Functionally, catalyzes the deamination of various vicinal amino-alcohols to oxo compounds. Allows this organism to utilize ethanolamine as the sole source of nitrogen and carbon in the presence of external vitamin B12. The protein is Ethanolamine ammonia-lyase small subunit of Escherichia coli (strain 55989 / EAEC).